A 742-amino-acid chain; its full sequence is Photosystem I P700 chlorophyll a apoprotein A2 2 (742 aa).

8 helical membrane-spanning segments follow: residues 46-69 (IFAT…FHVA), 135-158 (LYQG…LHLQ), 175-199 (LNHH…HVAI), 273-291 (MAHH…GHMY), 334-357 (LHFQ…QHMY), 373-399 (AALY…IFWI), 421-443 (AIIS…IYVH), and 524-542 (FLVH…LICV). 2 residues coordinate [4Fe-4S] cluster: cysteine 566 and cysteine 575. Transmembrane regions (helical) follow at residues 583–604 (SFYL…YWHW) and 651–673 (LSVW…MFLI). Positions 662, 670, and 678 each coordinate chlorophyll a. A phylloquinone-binding site is contributed by tryptophan 679. The chain crosses the membrane as a helical span at residues 715 to 735 (LVGLAHFTVGYILTYAAFLIA).

It belongs to the PsaA/PsaB family. As to quaternary structure, the PsaA/B heterodimer binds the P700 chlorophyll special pair and subsequent electron acceptors. PSI consists of a core antenna complex that captures photons, and an electron transfer chain that converts photonic excitation into a charge separation. The cyanobacterial PSI reaction center is composed of one copy each of PsaA,B,C,D,E,F,I,J,K,L,M and X, and forms trimeric complexes. PSI electron transfer chain: 5 chlorophyll a, 1 chlorophyll a', 2 phylloquinones and 3 4Fe-4S clusters. PSI core antenna: 90 chlorophyll a, 22 carotenoids, 3 phospholipids and 1 galactolipid. P700 is a chlorophyll a/chlorophyll a' dimer, A0 is one or more chlorophyll a, A1 is one or both phylloquinones and FX is a shared 4Fe-4S iron-sulfur center. serves as cofactor.

Its subcellular location is the cellular thylakoid membrane. It catalyses the reaction reduced [plastocyanin] + hnu + oxidized [2Fe-2S]-[ferredoxin] = oxidized [plastocyanin] + reduced [2Fe-2S]-[ferredoxin]. PsaA and PsaB bind P700, the primary electron donor of photosystem I (PSI), as well as the electron acceptors A0, A1 and FX. PSI is a plastocyanin/cytochrome c6-ferredoxin oxidoreductase, converting photonic excitation into a charge separation, which transfers an electron from the donor P700 chlorophyll pair to the spectroscopically characterized acceptors A0, A1, FX, FA and FB in turn. Oxidized P700 is reduced on the lumenal side of the thylakoid membrane by plastocyanin or cytochrome c6. This is Photosystem I P700 chlorophyll a apoprotein A2 2 (psaB2) from Nostoc sp. (strain PCC 7120 / SAG 25.82 / UTEX 2576).